A 232-amino-acid polypeptide reads, in one-letter code: Ribose-5-phosphate isomerase A (232 aa).

Substrate contacts are provided by residues 29–32, 86–89, and 99–102; these read SGST, DGAD, and KGGG. Glu108 acts as the Proton acceptor in catalysis. Residue Lys126 participates in substrate binding.

Belongs to the ribose 5-phosphate isomerase family. In terms of assembly, homodimer.

The enzyme catalyses aldehydo-D-ribose 5-phosphate = D-ribulose 5-phosphate. It functions in the pathway carbohydrate degradation; pentose phosphate pathway; D-ribose 5-phosphate from D-ribulose 5-phosphate (non-oxidative stage): step 1/1. Functionally, catalyzes the reversible conversion of ribose-5-phosphate to ribulose 5-phosphate. The protein is Ribose-5-phosphate isomerase A of Synechococcus sp. (strain ATCC 27144 / PCC 6301 / SAUG 1402/1) (Anacystis nidulans).